The sequence spans 270 residues: MPELPEVETTIRGLSEVLMGEKIIDVKVRRASLRRPIPSDIQERLIGSTIISLSRRAKYGIIVNDRDDALIFHLGMSGRWKINPENFEKHDHFVLQTKNNFIVSLYDPRRFGSLDLVKKNQLLEWSYFRNIGPEPLTGNFNPEYLQKKLFSSSAPIKKILLDQKVVAGIGNIYACEALHQAKIHPQRPSKNLNFDEITSLVFSIKNILQKAIAEGGSTLKDYARPNGELGYFSTKFKVYGKEGEQCECGHTIERYTLGGRSTFLCSSCQK.

Proline 2 serves as the catalytic Schiff-base intermediate with DNA. The active-site Proton donor is glutamate 3. The active-site Proton donor; for beta-elimination activity is the lysine 58. Histidine 90 and arginine 109 together coordinate DNA. Residues 237–270 (KVYGKEGEQCECGHTIERYTLGGRSTFLCSSCQK) form an FPG-type zinc finger. The Proton donor; for delta-elimination activity role is filled by arginine 260.

Belongs to the FPG family. In terms of assembly, monomer. Zn(2+) is required as a cofactor.

The enzyme catalyses Hydrolysis of DNA containing ring-opened 7-methylguanine residues, releasing 2,6-diamino-4-hydroxy-5-(N-methyl)formamidopyrimidine.. The catalysed reaction is 2'-deoxyribonucleotide-(2'-deoxyribose 5'-phosphate)-2'-deoxyribonucleotide-DNA = a 3'-end 2'-deoxyribonucleotide-(2,3-dehydro-2,3-deoxyribose 5'-phosphate)-DNA + a 5'-end 5'-phospho-2'-deoxyribonucleoside-DNA + H(+). Its function is as follows. Involved in base excision repair of DNA damaged by oxidation or by mutagenic agents. Acts as a DNA glycosylase that recognizes and removes damaged bases. Has a preference for oxidized purines, such as 7,8-dihydro-8-oxoguanine (8-oxoG). Has AP (apurinic/apyrimidinic) lyase activity and introduces nicks in the DNA strand. Cleaves the DNA backbone by beta-delta elimination to generate a single-strand break at the site of the removed base with both 3'- and 5'-phosphates. This Zymomonas mobilis subsp. mobilis (strain ATCC 31821 / ZM4 / CP4) protein is Formamidopyrimidine-DNA glycosylase (mutM).